A 717-amino-acid polypeptide reads, in one-letter code: Segment polarity protein dishevelled homolog DVL-3 (717 aa).

Positions 1–82 (MGETKVIYHL…RVVCWLVSAD (82 aa)) constitute a DIX domain. The tract at residues 89–235 (GSVCADIQSD…PQIERSSSFS (147 aa)) is disordered. The segment covering 118–127 (HPNTRGSQEN) has biased composition (polar residues). The span at 140-155 (ARRERPGRKETSEHAT) shows a compositional bias: basic and acidic residues. Positions 173–189 (ESSSTLMSSELDSTSFF) are enriched in low complexity. Residues 199-210 (RFSNSTEQSSAS) are compositionally biased toward polar residues. Residues 212–224 (LMRRHKRRRRKPK) are compositionally biased toward basic residues. One can recognise a PDZ domain in the interval 248 to 333 (TVTLNMEKYN…KPGPITLTVA (86 aa)). Positions 421–495 (SESGLEVRDR…SEQCYYIFGD (75 aa)) constitute a DEP domain. Residues 552–653 (PDPAYIYGGG…THQSFGPPGI (102 aa)) form a disordered region. Positions 564-579 (GSQHSEGSRSSGSNRS) are enriched in low complexity. 2 stretches are compositionally biased toward basic and acidic residues: residues 580-593 (STEKRKDRETKGGD) and 602-618 (ESDHTTRSSLRRDRAAS). The segment covering 629 to 645 (HRSHHSIAHSIRSHHTH) has biased composition (basic residues).

This sequence belongs to the DSH family. In terms of tissue distribution, expressed throughout the epidermis.

It is found in the cytoplasm. In terms of biological role, involved in the signal transduction pathway mediated by multiple Wnt genes. Required during ciliogenesis for the docking of basal bodies to the apical plasma membrane. This is Segment polarity protein dishevelled homolog DVL-3 from Xenopus laevis (African clawed frog).